We begin with the raw amino-acid sequence, 346 residues long: tRNA N6-adenosine threonylcarbamoyltransferase (346 aa).

His-111 and His-115 together coordinate Fe cation. Residues 134–138 (LVSGG), Asp-167, Gly-180, Asp-184, and Asn-280 each bind substrate. Asp-308 serves as a coordination point for Fe cation.

It belongs to the KAE1 / TsaD family. Fe(2+) serves as cofactor.

It is found in the cytoplasm. It carries out the reaction L-threonylcarbamoyladenylate + adenosine(37) in tRNA = N(6)-L-threonylcarbamoyladenosine(37) in tRNA + AMP + H(+). Functionally, required for the formation of a threonylcarbamoyl group on adenosine at position 37 (t(6)A37) in tRNAs that read codons beginning with adenine. Is involved in the transfer of the threonylcarbamoyl moiety of threonylcarbamoyl-AMP (TC-AMP) to the N6 group of A37, together with TsaE and TsaB. TsaD likely plays a direct catalytic role in this reaction. The polypeptide is tRNA N6-adenosine threonylcarbamoyltransferase (Crocosphaera subtropica (strain ATCC 51142 / BH68) (Cyanothece sp. (strain ATCC 51142))).